Here is a 238-residue protein sequence, read N- to C-terminus: Lactate utilization protein A (238 aa).

The protein belongs to the LutA/YkgE family.

In terms of biological role, is involved in L-lactate degradation and allows cells to grow with lactate as the sole carbon source. This is Lactate utilization protein A from Anoxybacillus flavithermus (strain DSM 21510 / WK1).